Consider the following 350-residue polypeptide: Nicotinate-nucleotide--dimethylbenzimidazole phosphoribosyltransferase (350 aa).

Glu-317 serves as the catalytic Proton acceptor.

It belongs to the CobT family.

It catalyses the reaction 5,6-dimethylbenzimidazole + nicotinate beta-D-ribonucleotide = alpha-ribazole 5'-phosphate + nicotinate + H(+). It functions in the pathway nucleoside biosynthesis; alpha-ribazole biosynthesis; alpha-ribazole from 5,6-dimethylbenzimidazole: step 1/2. Functionally, catalyzes the synthesis of alpha-ribazole-5'-phosphate from nicotinate mononucleotide (NAMN) and 5,6-dimethylbenzimidazole (DMB). The polypeptide is Nicotinate-nucleotide--dimethylbenzimidazole phosphoribosyltransferase (Shewanella sp. (strain MR-7)).